A 239-amino-acid polypeptide reads, in one-letter code: Large ribosomal subunit protein uL30 (239 aa).

Residues M1–M22 form a disordered region.

Belongs to the universal ribosomal protein uL30 family.

The protein is Large ribosomal subunit protein uL30 (RPL7) of Encephalitozoon cuniculi (strain GB-M1) (Microsporidian parasite).